Consider the following 555-residue polypeptide: Glutamine--tRNA ligase (555 aa).

The 'HIGH' region signature appears at 35-45 (PEPNGYLHIGH). ATP is bound by residues 36 to 38 (EPN) and 42 to 48 (HIGHAKS). D68 and Y213 together coordinate L-glutamine. Residues T232 and 262–263 (RL) each bind ATP. The 'KMSKS' region signature appears at 269–273 (ITSKR).

The protein belongs to the class-I aminoacyl-tRNA synthetase family. As to quaternary structure, monomer.

It is found in the cytoplasm. It catalyses the reaction tRNA(Gln) + L-glutamine + ATP = L-glutaminyl-tRNA(Gln) + AMP + diphosphate. The polypeptide is Glutamine--tRNA ligase (Stutzerimonas stutzeri (strain A1501) (Pseudomonas stutzeri)).